We begin with the raw amino-acid sequence, 267 residues long: uncharacterized protein (267 aa).

The 232-residue stretch at 17–248 (LKVENLTKIF…PRDRTSIEFL (232 aa)) folds into the ABC transporter domain. 53-60 (GPSGCGKT) serves as a coordination point for ATP.

Belongs to the ABC transporter superfamily.

This is an uncharacterized protein from Methanocaldococcus jannaschii (strain ATCC 43067 / DSM 2661 / JAL-1 / JCM 10045 / NBRC 100440) (Methanococcus jannaschii).